The sequence spans 330 residues: Beta-ketoacyl-[acyl-carrier-protein] synthase III (330 aa).

Active-site residues include cysteine 111 and histidine 249. Residues 250–254 are ACP-binding; that stretch reads QANTR. Asparagine 279 is an active-site residue.

This sequence belongs to the thiolase-like superfamily. FabH family. Homodimer.

The protein localises to the cytoplasm. It carries out the reaction malonyl-[ACP] + acetyl-CoA + H(+) = 3-oxobutanoyl-[ACP] + CO2 + CoA. It participates in lipid metabolism; fatty acid biosynthesis. In terms of biological role, catalyzes the condensation reaction of fatty acid synthesis by the addition to an acyl acceptor of two carbons from malonyl-ACP. Catalyzes the first condensation reaction which initiates fatty acid synthesis and may therefore play a role in governing the total rate of fatty acid production. Possesses both acetoacetyl-ACP synthase and acetyl transacylase activities. Its substrate specificity determines the biosynthesis of branched-chain and/or straight-chain of fatty acids. The sequence is that of Beta-ketoacyl-[acyl-carrier-protein] synthase III from Pseudomonas aeruginosa (strain LESB58).